A 132-amino-acid polypeptide reads, in one-letter code: Methylglyoxal synthase (132 aa).

Residues 1-132 (MNIALIAHDQ…LLEWREIEDK (132 aa)) form the MGS-like domain. The substrate site is built by H8 and K12. D60 acts as the Proton donor/acceptor in catalysis. H87 lines the substrate pocket.

It belongs to the methylglyoxal synthase family.

It catalyses the reaction dihydroxyacetone phosphate = methylglyoxal + phosphate. Catalyzes the formation of methylglyoxal from dihydroxyacetone phosphate. This chain is Methylglyoxal synthase, found in Thermoanaerobacter pseudethanolicus (strain ATCC 33223 / 39E) (Clostridium thermohydrosulfuricum).